Consider the following 633-residue polypeptide: ATP-dependent zinc metalloprotease FtsH (633 aa).

Residues 1 to 19 (MTPSNEPGKQDQIPQPGPT) lie on the Cytoplasmic side of the membrane. Residues 20–40 (IPNQYSFLWLSAAIFLMFLWL) form a helical membrane-spanning segment. The Periplasmic segment spans residues 41–133 (QGNNQQQQQE…SRSGRPWWQE (93 aa)). Residues 134–154 (LILGFLPWILLLALMFWFWGA) form a helical membrane-spanning segment. Topologically, residues 155-633 (AQKRMTQGGG…LEEARSRETA (479 aa)) are cytoplasmic. 226–233 (GPPGTGKT) serves as a coordination point for ATP. Histidine 447 lines the Zn(2+) pocket. The active site involves glutamate 448. Residues histidine 451 and aspartate 523 each coordinate Zn(2+).

It in the central section; belongs to the AAA ATPase family. This sequence in the C-terminal section; belongs to the peptidase M41 family. Homohexamer. It depends on Zn(2+) as a cofactor.

It is found in the cell inner membrane. Functionally, acts as a processive, ATP-dependent zinc metallopeptidase for both cytoplasmic and membrane proteins. Plays a role in the quality control of integral membrane proteins. This chain is ATP-dependent zinc metalloprotease FtsH, found in Marinobacter nauticus (strain ATCC 700491 / DSM 11845 / VT8) (Marinobacter aquaeolei).